We begin with the raw amino-acid sequence, 258 residues long: U6 snRNA phosphodiesterase 1 (258 aa).

The tract at residues 1-20 is disordered; sequence MALVDYGGSSSSASEDEDCT. Histidine 117 functions as the Proton acceptor in the catalytic mechanism. Residues 117–119, tyrosine 200, and 202–208 contribute to the AMP site; these read HLS and PASFHVS. Residues tyrosine 200 and 204-208 contribute to the UMP site; that span reads SFHVS. The active-site Proton donor is the histidine 206.

This sequence belongs to the 2H phosphoesterase superfamily. USB1 family.

The protein resides in the nucleus. The catalysed reaction is a 3'-end uridylyl-uridine-RNA = a 3'-end 2',3'-cyclophospho-uridine-RNA + uridine. 3'-5' RNA exonuclease that trims the 3' end of oligo(U) tracts of the pre-U6 small nuclear RNA (snRNA) molecule, leading to the formation of a mature U6 snRNA 3' end-terminated with a 2',3'-cyclic phosphate. Participates in the U6 snRNA 3' end processing that prevents U6 snRNA degradation. This Drosophila melanogaster (Fruit fly) protein is U6 snRNA phosphodiesterase 1.